The primary structure comprises 266 residues: MLTYPQIDPVALAVGPLKIHWYGLMYLIGIGGAWLLASRRMKRFDPTWTKERLSDLVFWVACGVILGGRLGYVLFYNLDEYIANPTLIFEVWKGGMSFHGGLLGVMLAVWWFGKRHGKSFFQLMDFIAPLVPIGLGAGRIGNFINSELWGKVSDVPWAMVFPNGGPLPRHPSQLYQFALEGVALFVILWLFTRKPRPTASVSGLFVLCYGIFRFVVEFVRVPDAQLGYLAWGWLTMGQVLCVPMVLAGIALMVWAYRRDAAQPKAA.

Transmembrane regions (helical) follow at residues 17-37, 56-76, 92-112, 120-140, 171-191, 199-219, and 233-253; these read LKIH…WLLA, LVFW…VLFY, WKGG…VWWF, FFQL…AGRI, PSQL…LWLF, ASVS…VEFV, and WLTM…ALMV. Position 139 (arginine 139) interacts with a 1,2-diacyl-sn-glycero-3-phospho-(1'-sn-glycerol).

It belongs to the Lgt family.

The protein localises to the cell inner membrane. The catalysed reaction is L-cysteinyl-[prolipoprotein] + a 1,2-diacyl-sn-glycero-3-phospho-(1'-sn-glycerol) = an S-1,2-diacyl-sn-glyceryl-L-cysteinyl-[prolipoprotein] + sn-glycerol 1-phosphate + H(+). The protein operates within protein modification; lipoprotein biosynthesis (diacylglyceryl transfer). Its function is as follows. Catalyzes the transfer of the diacylglyceryl group from phosphatidylglycerol to the sulfhydryl group of the N-terminal cysteine of a prolipoprotein, the first step in the formation of mature lipoproteins. The chain is Phosphatidylglycerol--prolipoprotein diacylglyceryl transferase from Pseudomonas aeruginosa (strain UCBPP-PA14).